Consider the following 249-residue polypeptide: tRNA (guanine-N(1)-)-methyltransferase (249 aa).

Residues glycine 118 and isoleucine 138–leucine 143 each bind S-adenosyl-L-methionine.

Belongs to the RNA methyltransferase TrmD family. Homodimer.

The protein resides in the cytoplasm. It catalyses the reaction guanosine(37) in tRNA + S-adenosyl-L-methionine = N(1)-methylguanosine(37) in tRNA + S-adenosyl-L-homocysteine + H(+). Specifically methylates guanosine-37 in various tRNAs. The chain is tRNA (guanine-N(1)-)-methyltransferase from Alkaliphilus oremlandii (strain OhILAs) (Clostridium oremlandii (strain OhILAs)).